Here is a 509-residue protein sequence, read N- to C-terminus: 3-octaprenyl-4-hydroxybenzoate carboxy-lyase (509 aa).

N179 lines the Mn(2+) pocket. Prenylated FMN contacts are provided by residues 182-184 (IYR), 196-198 (RWL), and 201-202 (RG). Position 245 (E245) interacts with Mn(2+). Residue D304 is the Proton donor of the active site.

It belongs to the UbiD family. Homohexamer. Prenylated FMN is required as a cofactor. Requires Mn(2+) as cofactor.

The protein localises to the cell membrane. It carries out the reaction a 4-hydroxy-3-(all-trans-polyprenyl)benzoate + H(+) = a 2-(all-trans-polyprenyl)phenol + CO2. It participates in cofactor biosynthesis; ubiquinone biosynthesis. In terms of biological role, catalyzes the decarboxylation of 3-octaprenyl-4-hydroxy benzoate to 2-octaprenylphenol, an intermediate step in ubiquinone biosynthesis. The chain is 3-octaprenyl-4-hydroxybenzoate carboxy-lyase from Cupriavidus pinatubonensis (strain JMP 134 / LMG 1197) (Cupriavidus necator (strain JMP 134)).